A 447-amino-acid chain; its full sequence is Argininosuccinate lyase (447 aa).

Belongs to the lyase 1 family. Argininosuccinate lyase subfamily.

The protein resides in the cytoplasm. The catalysed reaction is 2-(N(omega)-L-arginino)succinate = fumarate + L-arginine. It participates in amino-acid biosynthesis; L-arginine biosynthesis; L-arginine from L-ornithine and carbamoyl phosphate: step 3/3. The polypeptide is Argininosuccinate lyase (Sulfolobus acidocaldarius (strain ATCC 33909 / DSM 639 / JCM 8929 / NBRC 15157 / NCIMB 11770)).